Consider the following 111-residue polypeptide: Nucleoid-associated protein Cpar_0834 (111 aa).

Belongs to the YbaB/EbfC family. In terms of assembly, homodimer.

Its subcellular location is the cytoplasm. The protein resides in the nucleoid. Its function is as follows. Binds to DNA and alters its conformation. May be involved in regulation of gene expression, nucleoid organization and DNA protection. The protein is Nucleoid-associated protein Cpar_0834 of Chlorobaculum parvum (strain DSM 263 / NCIMB 8327) (Chlorobium vibrioforme subsp. thiosulfatophilum).